Reading from the N-terminus, the 400-residue chain is CinA-like protein (400 aa).

The protein belongs to the CinA family.

The chain is CinA-like protein from Escherichia coli (strain K12 / MC4100 / BW2952).